Reading from the N-terminus, the 87-residue chain is X protein (87 aa).

The nuclear export signal stretch occupies residues 5–16; that stretch reads LRLTLLELVRRL. Positions 18 to 87 are disordered; the sequence is GNATIESGRL…PANRKGAAVE (70 aa). A compositionally biased stretch (low complexity) spans 36 to 48; the sequence is DTTTGTTGVTKTT.

Interacts with P and N proteins. These interactions presumably promote nuclear targeting of the X protein in infected cells. Interacts with host MAVS; this interaction inhibits MAVS-induced apoptosis. Phosphorylated.

It localises to the host nucleus. It is found in the host mitochondrion. Plays an essential role in the inhibition of host apoptosis. Mediates host mitochondria-mediated apoptosis through interaction with the mitochondrial antiviral signaling protein/MAVS and thereby promotes viral persistence in host central nervous system. Within the host nucleus, regulates viral RNA synthesis and polymerase complex assembly. The chain is X protein (P/X) from Borna disease virus 1 (BoDV-1).